We begin with the raw amino-acid sequence, 85 residues long: uncharacterized protein (85 aa).

Positions 1-35 (MIEDPSKKISLWQKWINVDPKKRILFSLGLFALSA) are cleaved as a signal peptide.

Its subcellular location is the secreted. This is an uncharacterized protein from Dictyostelium discoideum (Social amoeba).